Consider the following 321-residue polypeptide: Cytochrome c biogenesis protein CcsA (321 aa).

The next 8 helical transmembrane spans lie at 17 to 37 (VVSI…FVGL), 48 to 68 (TFFC…HLPI), 71 to 91 (LYES…VPYF), 98 to 118 (LSTI…WGLL), 143 to 163 (MVSG…LLVI), 225 to 245 (ILSI…VWAN), 259 to 273 (TWAF…IYFH), and 286 to 306 (AIVA…VNLL).

This sequence belongs to the CcmF/CycK/Ccl1/NrfE/CcsA family. In terms of assembly, may interact with Ccs1.

The protein localises to the plastid. It is found in the chloroplast thylakoid membrane. In terms of biological role, required during biogenesis of c-type cytochromes (cytochrome c6 and cytochrome f) at the step of heme attachment. This chain is Cytochrome c biogenesis protein CcsA, found in Populus alba (White poplar).